Consider the following 105-residue polypeptide: Urease subunit beta (105 aa).

It belongs to the urease beta subunit family. Heterotrimer of UreA (gamma), UreB (beta) and UreC (alpha) subunits. Three heterotrimers associate to form the active enzyme.

It is found in the cytoplasm. The catalysed reaction is urea + 2 H2O + H(+) = hydrogencarbonate + 2 NH4(+). It functions in the pathway nitrogen metabolism; urea degradation; CO(2) and NH(3) from urea (urease route): step 1/1. The sequence is that of Urease subunit beta from Prochlorococcus marinus (strain MIT 9313).